Reading from the N-terminus, the 206-residue chain is GTP-binding protein YPTC5 (206 aa).

15-22 (GDSGVGKT) is a binding site for GTP. The Effector region motif lies at 37 to 45 (YKATIGADF). GTP contacts are provided by residues 63-67 (DTAGQ) and 125-128 (NKID). 2 S-geranylgeranyl cysteine lipidation sites follow: Cys-205 and Cys-206.

This sequence belongs to the small GTPase superfamily. Rab family.

The protein localises to the cell membrane. In terms of biological role, protein transport. Probably involved in vesicular traffic. The sequence is that of GTP-binding protein YPTC5 (YPTC5) from Chlamydomonas reinhardtii (Chlamydomonas smithii).